The chain runs to 270 residues: Chromo domain-containing protein cec-4 (270 aa).

Disordered regions lie at residues Met-1–Lys-24 and Lys-143–Val-229. In terms of domain architecture, Chromo spans Tyr-87–Thr-147. Basic residues-rich tracts occupy residues Thr-151–Ala-167 and Thr-187–Arg-197. Over residues Leu-205 to Val-229 the composition is skewed to basic and acidic residues.

Interacts with mono-, di- and tri-methylated 'Lys-9' residues on histone H3. Weakly interacts with methylated 'Lys-37' residues on histone H3.

It localises to the nucleus inner membrane. The protein resides in the membrane. Its function is as follows. Chromatin anchor protein which binds to methylated lysine residues on histone H3, thereby recruiting heterochromatin to the nuclear periphery, especially in embryonic cells, with a lesser role in differentiated cells. May be required for the correct positioning of chromatin and nucleoli in embryos. The sequence is that of Chromo domain-containing protein cec-4 from Caenorhabditis elegans.